We begin with the raw amino-acid sequence, 446 residues long: Xylose isomerase 1 (446 aa).

Active-site residues include histidine 109 and aspartate 112. Mg(2+)-binding residues include glutamate 240, glutamate 276, histidine 279, aspartate 304, aspartate 315, aspartate 317, and aspartate 347.

Belongs to the xylose isomerase family. In terms of assembly, homotetramer. The cofactor is Mg(2+).

It localises to the cytoplasm. It catalyses the reaction alpha-D-xylose = alpha-D-xylulofuranose. The sequence is that of Xylose isomerase 1 from Xanthomonas campestris pv. campestris (strain 8004).